A 156-amino-acid polypeptide reads, in one-letter code: MSRRHSAEKREVLPDPKFGNIIVTKFMNSVMYAGKKSVAESIVYGAFGIIESKTKQNPLTVFEQALDNVMPTIEVRSRRVGGATYQVPVEVRSTRRQALGIRWLISAARDRNEKTMTERLSAELLDASNNRGNAVKKREDVHRMAEANRAFSHYRW.

It belongs to the universal ribosomal protein uS7 family. As to quaternary structure, part of the 30S ribosomal subunit. Contacts proteins S9 and S11.

Functionally, one of the primary rRNA binding proteins, it binds directly to 16S rRNA where it nucleates assembly of the head domain of the 30S subunit. Is located at the subunit interface close to the decoding center, probably blocks exit of the E-site tRNA. The protein is Small ribosomal subunit protein uS7 of Bradyrhizobium sp. (strain BTAi1 / ATCC BAA-1182).